A 462-amino-acid polypeptide reads, in one-letter code: DEK domain-containing chromatin-associated protein 1 (462 aa).

Disordered regions lie at residues 18 to 91 and 212 to 390; these read AVTE…TQGR and KETK…RKEL. Positions 20–32 are enriched in basic and acidic residues; that stretch reads TEKDTETKKKDEV. A compositionally biased stretch (acidic residues) spans 33–46; that stretch reads EKDEAMEEKGEEID. Residues 77–91 show a composition bias toward polar residues; sequence PRSSGNKPLSITQGR. A compositionally biased stretch (acidic residues) spans 267-276; the sequence is NGEDDVAPEE. Composition is skewed to basic and acidic residues over residues 277-303, 312-322, and 347-360; these read ENNK…TDKK, EKPAAEEEKSI, and QKVD…EKGK. The Nuclear localization signal motif lies at 344-351; it reads SKKQKVDK. One can recognise a DEK-C domain in the interval 384 to 439; sequence EPTRKELHVVVTKILKEVDFNTATLSDILRKLGSHFGIDLMHRKAEVKDIITDAIN. DNA-binding regions lie at residues 402–416 and 431–435; these read DFNT…RKLG and KDIIT. A disordered region spans residues 438 to 462; that stretch reads INEMSDDDDEKEEDTEDEGEKEGKD. The segment covering 441–462 has biased composition (acidic residues); it reads MSDDDDEKEEDTEDEGEKEGKD.

As to quaternary structure, found in a mRNA splicing-dependent exon junction complex (EJC). Binds specifically histones H3 and H4.

It is found in the nucleus. The protein localises to the nucleolus. In terms of biological role, chromatin-associated protein which contributes to the modulation of chromatin structure (such as super-helical structure of DNA) and function. Binds to chromatin of protein-coding genes throughout the genome to regulate nucleosome occupancy and chromatin accessibility, and to modulate the expression of target genes. This Arabidopsis thaliana (Mouse-ear cress) protein is DEK domain-containing chromatin-associated protein 1.